The primary structure comprises 920 residues: Urea transporter 2 (920 aa).

A disordered region spans residues 25 to 57 (FTSPSWPSTSPDTHPALPLLEMPEEKDLRSSNE). Residues 26-39 (TSPSWPSTSPDTHP) are compositionally biased toward low complexity. Positions 47–57 (PEEKDLRSSNE) are enriched in basic and acidic residues. 9 helical membrane passes run 151 to 170 (WWTITGGLGTVVSTLTALAL), 176 to 196 (AIASGLHGYNGMLVGLLMAVF), 204 to 224 (WWLLFPVTFTAMSCPVLSSAL), 233 to 253 (LPVFTLPFNIAVTLYLAATGH), 272 to 291 (ITWTEMEMPLLLQAIPVGVG), 302 to 322 (GGVFLVALFISSPLICLHAAI), 346 to 366 (WSYNCVLSCIAIGGMFYALTW), 370 to 390 (LLALICALFCAYMEAAISNIM), and 392 to 412 (VVGVPPGTWAFCLATIIFLLL). A disordered region spans residues 446–467 (EKAPSGGGGEHPPTAGPKVEEG). S477 bears the Phosphoserine mark. The next 4 membrane-spanning stretches (helical) occupy residues 600–620 (GILIILGLFIQNPWWAISGCL), 638–658 (AIAAGFHGYNGVLVGLLMAVF), 666–686 (WWLLLPVIIMSMSCPILSSAL), and 695–715 (LPVFTLPFNITVTLYLAATGH). N-linked (GlcNAc...) asparagine glycosylation is present at N733. 4 helical membrane-spanning segments follow: residues 764–784 (GGIFLIALFISSPLICLHAAI), 803–823 (IYFGLCGFNSTLACIAIGGMF), 832–852 (LLAIACALFAAYLGAALANML), and 854–874 (VFGLPPCTWPFCLSALTFLLL).

This sequence belongs to the urea transporter family. Interacts with SNAPIN which enhances its urea transport activity. Epressed in the inner medulla of the kidney (at protein level). As to expression, expressed in the kidney.

It is found in the apical cell membrane. Its subcellular location is the cell membrane. The catalysed reaction is urea(in) = urea(out). With respect to regulation, inhibited by phloretin. In terms of biological role, mediates the transport of urea driven by a concentration gradient across the cell membrane of the renal inner medullary collecting duct which is critical to the urinary concentrating mechanism. Functionally, mediates the transport of urea driven by a concentration gradient across the cell membrane of the kidney inner medullary collecting duct which is critical to the urinary concentrating mechanism. This Homo sapiens (Human) protein is Urea transporter 2 (SLC14A2).